A 427-amino-acid chain; its full sequence is 2-oxoglutarate and iron-dependent oxygenase JMJD4 (427 aa).

The JmjC domain occupies 147 to 306 (SLVNDLEDIF…NMWHFLQQEL (160 aa)). 3 residues coordinate Fe cation: H194, D196, and H274.

The protein belongs to the JMJD6 family. In terms of assembly, interacts with ETF1. Interacts with the ETF1-GSPT1 complex. Requires Fe(2+) as cofactor.

It is found in the cytoplasm. It carries out the reaction L-lysyl-[protein] + 2-oxoglutarate + O2 = 4-hydroxy-L-lysyl-[protein] + succinate + CO2. Functionally, catalyzes the 2-oxoglutarate and iron-dependent C4-lysyl hydroxylation of ETF1 at 'Lys-63' thereby promoting the translational termination efficiency of ETF1. Not essential for embryonic stem cell (ESC) maintenance and the embryonic and postnatal development. The sequence is that of 2-oxoglutarate and iron-dependent oxygenase JMJD4 (Jmjd4) from Mus musculus (Mouse).